The sequence spans 177 residues: Large ribosomal subunit protein uL10 (177 aa).

The protein belongs to the universal ribosomal protein uL10 family. Part of the ribosomal stalk of the 50S ribosomal subunit. The N-terminus interacts with L11 and the large rRNA to form the base of the stalk. The C-terminus forms an elongated spine to which L12 dimers bind in a sequential fashion forming a multimeric L10(L12)X complex.

Forms part of the ribosomal stalk, playing a central role in the interaction of the ribosome with GTP-bound translation factors. In Xanthomonas campestris pv. campestris (strain 8004), this protein is Large ribosomal subunit protein uL10.